The primary structure comprises 228 residues: uncharacterized protein (228 aa).

An N-terminal signal peptide occupies residues Met1–Ala28.

This is an uncharacterized protein from Bacillus subtilis (strain 168).